The following is a 408-amino-acid chain: MVQINENYLKLKAGYLFPEISKRVNSYTQANQGSEVIKLGIGDVTEPLPNACINAMSKALNEMGTHEGFKGYGPEQGYEWLREKISKNDFISRGCQITPEEIFVSDGSKCDSSNILDILGHDNLIAVTDPVYPVYVDSNVMTGRTGETLKNGTYQGLLYLAINEDNNFLPEIPKNKVDIVYLCFPNNPTGATITKDELKKWVDYANHNKSLILFDAAYEAFIQDKDVPHSIYEIDGAKSCAIEFRSFSKNAGFTGVRCAYTVIPKCLTGQNSKGDKVDLWPLWNRRQCTKFNGVSYVVQKGAEAVYSSQGKKEVNSLIDFYMENAKIMRNKLRSAGFTVYGGCNAPYVWIKVPADMTSWDFFDHLLEKANVVGTPGSGFGLAGEGYFRLSAFNSRLNVSNAMERIINI.

The substrate site is built by Y15 and G42. Residues Y72, 108 to 109 (SK), Y132, N187, Y218, and 246 to 248 (SFS) contribute to the pyridoxal 5'-phosphate site. Residues K109, Y132, and N187 each coordinate substrate. N6-(pyridoxal phosphate)lysine is present on K249. The pyridoxal 5'-phosphate site is built by R257 and N292. Residues N292 and R388 each coordinate substrate.

It belongs to the class-I pyridoxal-phosphate-dependent aminotransferase family. LL-diaminopimelate aminotransferase subfamily. As to quaternary structure, homodimer. Pyridoxal 5'-phosphate serves as cofactor.

The catalysed reaction is (2S,6S)-2,6-diaminopimelate + 2-oxoglutarate = (S)-2,3,4,5-tetrahydrodipicolinate + L-glutamate + H2O + H(+). It participates in amino-acid biosynthesis; L-lysine biosynthesis via DAP pathway; LL-2,6-diaminopimelate from (S)-tetrahydrodipicolinate (aminotransferase route): step 1/1. Its function is as follows. Involved in the synthesis of meso-diaminopimelate (m-DAP or DL-DAP), required for both lysine and peptidoglycan biosynthesis. Catalyzes the direct conversion of tetrahydrodipicolinate to LL-diaminopimelate. The sequence is that of LL-diaminopimelate aminotransferase from Prochlorococcus marinus (strain MIT 9515).